The sequence spans 491 residues: Probable cytosol aminopeptidase (491 aa).

Mn(2+) is bound by residues Lys-264 and Asp-269. Residue Lys-276 is part of the active site. The Mn(2+) site is built by Asp-287, Asp-346, and Glu-348. Residue Arg-350 is part of the active site.

Belongs to the peptidase M17 family. Mn(2+) serves as cofactor.

The protein localises to the cytoplasm. It catalyses the reaction Release of an N-terminal amino acid, Xaa-|-Yaa-, in which Xaa is preferably Leu, but may be other amino acids including Pro although not Arg or Lys, and Yaa may be Pro. Amino acid amides and methyl esters are also readily hydrolyzed, but rates on arylamides are exceedingly low.. It carries out the reaction Release of an N-terminal amino acid, preferentially leucine, but not glutamic or aspartic acids.. Its function is as follows. Presumably involved in the processing and regular turnover of intracellular proteins. Catalyzes the removal of unsubstituted N-terminal amino acids from various peptides. The chain is Probable cytosol aminopeptidase from Xylella fastidiosa (strain Temecula1 / ATCC 700964).